The sequence spans 276 residues: Undecaprenyl-diphosphatase 1 (276 aa).

8 helical membrane passes run 1 to 21 (MSLW…LFPV), 44 to 64 (QLLP…LWYF), 87 to 107 (GHLM…GLLL), 114 to 134 (VFHD…LLWL), 150 to 170 (LTFK…IPGF), 190 to 210 (AAEF…LLEL), 222 to 242 (DALL…RFLM), and 251 to 271 (LASF…WFMF).

It belongs to the UppP family.

It localises to the cell inner membrane. It catalyses the reaction di-trans,octa-cis-undecaprenyl diphosphate + H2O = di-trans,octa-cis-undecaprenyl phosphate + phosphate + H(+). Catalyzes the dephosphorylation of undecaprenyl diphosphate (UPP). Confers resistance to bacitracin. This is Undecaprenyl-diphosphatase 1 from Burkholderia pseudomallei (strain 1106a).